Here is a 186-residue protein sequence, read N- to C-terminus: Ion-translocating oxidoreductase complex subunit B (186 aa).

A hydrophobic region spans residues 1–23; that stretch reads MLTPILALTALALIAGALLGFAA. One can recognise a 4Fe-4S domain in the interval 29 to 88; the sequence is EGNPIADQVDAVLPQTQCGQCGFGGCRPYAEAIAAGEAEINRCPPGGQDTVQTLADLLGV. [4Fe-4S] cluster is bound by residues cysteine 46, cysteine 49, cysteine 54, cysteine 71, cysteine 114, cysteine 117, cysteine 120, cysteine 124, cysteine 144, cysteine 147, cysteine 150, and cysteine 154. 4Fe-4S ferredoxin-type domains lie at 105 to 134 and 135 to 164; these read QVAW…GAAK and QMHT…MVPV.

It belongs to the 4Fe4S bacterial-type ferredoxin family. RnfB subfamily. As to quaternary structure, the complex is composed of six subunits: RnfA, RnfB, RnfC, RnfD, RnfE and RnfG. It depends on [4Fe-4S] cluster as a cofactor.

It is found in the cell inner membrane. In terms of biological role, part of a membrane-bound complex that couples electron transfer with translocation of ions across the membrane. The protein is Ion-translocating oxidoreductase complex subunit B of Alkalilimnicola ehrlichii (strain ATCC BAA-1101 / DSM 17681 / MLHE-1).